A 1400-amino-acid polypeptide reads, in one-letter code: DNA-directed RNA polymerase subunit beta' (1400 aa).

Zn(2+) contacts are provided by cysteine 71, cysteine 73, cysteine 86, and cysteine 89. Mg(2+) is bound by residues aspartate 462, aspartate 464, and aspartate 466. Zn(2+) contacts are provided by cysteine 811, cysteine 885, cysteine 892, and cysteine 895.

The protein belongs to the RNA polymerase beta' chain family. As to quaternary structure, the RNAP catalytic core consists of 2 alpha, 1 beta, 1 beta' and 1 omega subunit. When a sigma factor is associated with the core the holoenzyme is formed, which can initiate transcription. It depends on Mg(2+) as a cofactor. Zn(2+) serves as cofactor.

It carries out the reaction RNA(n) + a ribonucleoside 5'-triphosphate = RNA(n+1) + diphosphate. In terms of biological role, DNA-dependent RNA polymerase catalyzes the transcription of DNA into RNA using the four ribonucleoside triphosphates as substrates. This Brucella abortus (strain S19) protein is DNA-directed RNA polymerase subunit beta'.